The sequence spans 664 residues: Type IV inositol polyphosphate 5-phosphatase 3 (664 aa).

Positions 35-76 are disordered; the sequence is GRDPEYGADTDNESENEDAREDNDDSSSDEEGGSGSRGRESK. Positions 40 to 66 are enriched in acidic residues; that stretch reads YGADTDNESENEDAREDNDDSSSDEEG. Catalytic stretches follow at residues 514–529 and 592–607; these read ERII…LSSS and PKRT…SYGK.

This sequence belongs to the inositol polyphosphate 5-phosphatase family.

The enzyme catalyses a 1,2-diacyl-sn-glycero-3-phospho-(1D-myo-inositol-4,5-bisphosphate) + H2O = a 1,2-diacyl-sn-glycero-3-phospho-(1D-myo-inositol 4-phosphate) + phosphate. It catalyses the reaction a 1,2-diacyl-sn-glycero-3-phospho-(1D-myo-inositol-3,4,5-trisphosphate) + H2O = a 1,2-diacyl-sn-glycero-3-phospho-(1D-myo-inositol-3,4-bisphosphate) + phosphate. Has phosphatase activity toward PtdIns(4,5)P2 and PtdIns(3,4,5)P3. The protein is Type IV inositol polyphosphate 5-phosphatase 3 of Arabidopsis thaliana (Mouse-ear cress).